A 658-amino-acid polypeptide reads, in one-letter code: Glycogen debranching enzyme (658 aa).

Asp335 acts as the Nucleophile in catalysis. The active-site Proton donor is Glu370. Basic and acidic residues predominate over residues 457-468 (NDANGEGNRDGT). Positions 457–478 (NDANGEGNRDGTDSNFSNNHGT) are disordered.

It belongs to the glycosyl hydrolase 13 family.

It catalyses the reaction Hydrolysis of (1-&gt;6)-alpha-D-glucosidic linkages to branches with degrees of polymerization of three or four glucose residues in limit dextrin.. The protein operates within glycan degradation; glycogen degradation. Its function is as follows. Removes maltotriose and maltotetraose chains that are attached by 1,6-alpha-linkage to the limit dextrin main chain, generating a debranched limit dextrin. This chain is Glycogen debranching enzyme, found in Pectobacterium carotovorum subsp. carotovorum (strain PC1).